The primary structure comprises 312 residues: Taste receptor type 2 member 9 (312 aa).

At 1–9 (MPSAIEAIY) the chain is on the extracellular side. Residues 10 to 32 (IILIAGELTIGIWGNGFIVLVNC) traverse the membrane as a helical segment. The Cytoplasmic portion of the chain corresponds to 33 to 52 (IDWLKRRDVSLIDIILISLA). A helical transmembrane segment spans residues 53 to 72 (ISRICLLXVISLDGFFMLLF). Residues 73-86 (PTTYGNSVLVSIVB) lie on the Extracellular side of the membrane. A helical membrane pass occupies residues 87-109 (IVWTFANNSSLWFTSCLSIFYLL). The Cytoplasmic portion of the chain corresponds to 110–128 (KIANISHPFFFWLKLKINK). A helical membrane pass occupies residues 129-146 (VILAILLGSFLISLVISV). The Extracellular portion of the chain corresponds to 147-180 (XMNDDMWYHLFKVSHEENITWEFKVSKIPGTFKQ). Asparagine 164 is a glycosylation site (N-linked (GlcNAc...) asparagine). A helical transmembrane segment spans residues 181–203 (LTLNLGAMVPFILCLISFSLLLF). Residues 204-234 (SLVRHTKQIQLXATGFRDPSTEAHMRAIKAV) lie on the Cytoplasmic side of the membrane. The chain crosses the membrane as a helical span at residues 235–257 (IIFLLLLIVYYPVFLVMTSSALI). At 258–261 (PQGK) the chain is on the extracellular side. The chain crosses the membrane as a helical span at residues 262–284 (LVLMIGDIVTITFPSSHSFILIM). At 285–312 (GNSKLREAFLKMLRFVKRFLRRRKPFVP) the chain is on the cytoplasmic side.

The protein belongs to the G-protein coupled receptor T2R family.

It localises to the membrane. Its function is as follows. Gustducin-coupled receptor implicated in the perception of bitter compounds in the oral cavity and the gastrointestinal tract. Signals through PLCB2 and the calcium-regulated cation channel TRPM5. In Pongo pygmaeus (Bornean orangutan), this protein is Taste receptor type 2 member 9 (TAS2R9).